A 1153-amino-acid chain; its full sequence is Error-prone DNA polymerase (1153 aa).

The disordered stretch occupies residues 1107 to 1153; it reads DELIAPSASTEREAPLNDDRRDHPDLPAQQIRHPRNVRILPPSRDFH. Basic and acidic residues predominate over residues 1116–1131; the sequence is TEREAPLNDDRRDHPD.

This sequence belongs to the DNA polymerase type-C family. DnaE2 subfamily.

The protein resides in the cytoplasm. It catalyses the reaction DNA(n) + a 2'-deoxyribonucleoside 5'-triphosphate = DNA(n+1) + diphosphate. Its function is as follows. DNA polymerase involved in damage-induced mutagenesis and translesion synthesis (TLS). It is not the major replicative DNA polymerase. This is Error-prone DNA polymerase from Rhodopseudomonas palustris (strain BisA53).